The following is a 485-amino-acid chain: Glutamyl-tRNA(Gln) amidotransferase subunit A (485 aa).

Active-site charge relay system residues include Lys79 and Ser154. Catalysis depends on Ser178, which acts as the Acyl-ester intermediate.

Belongs to the amidase family. GatA subfamily. In terms of assembly, heterotrimer of A, B and C subunits.

It carries out the reaction L-glutamyl-tRNA(Gln) + L-glutamine + ATP + H2O = L-glutaminyl-tRNA(Gln) + L-glutamate + ADP + phosphate + H(+). In terms of biological role, allows the formation of correctly charged Gln-tRNA(Gln) through the transamidation of misacylated Glu-tRNA(Gln) in organisms which lack glutaminyl-tRNA synthetase. The reaction takes place in the presence of glutamine and ATP through an activated gamma-phospho-Glu-tRNA(Gln). The sequence is that of Glutamyl-tRNA(Gln) amidotransferase subunit A from Clostridium botulinum (strain Kyoto / Type A2).